A 238-amino-acid chain; its full sequence is Enoyl-CoA delta isomerase 3 (238 aa).

It belongs to the enoyl-CoA hydratase/isomerase family.

The protein localises to the cytoplasm. It localises to the nucleus. The enzyme catalyses a (3Z)-enoyl-CoA = a 4-saturated (2E)-enoyl-CoA. The catalysed reaction is a (3E)-enoyl-CoA = a 4-saturated (2E)-enoyl-CoA. It functions in the pathway lipid metabolism; fatty acid beta-oxidation. Functionally, able to isomerize both 3-cis and 3-trans double bonds into the 2-trans form in a range of enoyl-CoA species. Essential for the beta oxidation of unsaturated fatty acids. This Arabidopsis thaliana (Mouse-ear cress) protein is Enoyl-CoA delta isomerase 3.